We begin with the raw amino-acid sequence, 110 residues long: Defensin-like protein 296 (110 aa).

An N-terminal signal peptide occupies residues 1 to 28; that stretch reads MASKITIFFVLALVVVCTMMVCIPTATA. 6 disulfide bridges follow: C34–C52, C40–C57, C45–C59, C81–C102, C87–C107, and C95–C109.

This sequence belongs to the DEFL family.

The protein resides in the secreted. The polypeptide is Defensin-like protein 296 (Arabidopsis thaliana (Mouse-ear cress)).